We begin with the raw amino-acid sequence, 307 residues long: Small ribosomal subunit biogenesis GTPase RsgA (307 aa).

The segment at 1–20 is disordered; the sequence is MPSEHPFSDGISTPNPKETM. Positions 10 to 20 are enriched in polar residues; the sequence is GISTPNPKETM. Positions 85 to 242 constitute a CP-type G domain; it reads RQDAWKTKLI…LIDSPGLQEF (158 aa). Residues 135 to 138 and 184 to 192 contribute to the GTP site; these read NKAD and GQSGMGKST. Zn(2+) contacts are provided by Cys-266, Cys-271, His-273, and Cys-279.

The protein belongs to the TRAFAC class YlqF/YawG GTPase family. RsgA subfamily. Monomer. Associates with 30S ribosomal subunit, binds 16S rRNA. It depends on Zn(2+) as a cofactor.

It localises to the cytoplasm. Functionally, one of several proteins that assist in the late maturation steps of the functional core of the 30S ribosomal subunit. Helps release RbfA from mature subunits. May play a role in the assembly of ribosomal proteins into the subunit. Circularly permuted GTPase that catalyzes slow GTP hydrolysis, GTPase activity is stimulated by the 30S ribosomal subunit. The protein is Small ribosomal subunit biogenesis GTPase RsgA of Neisseria meningitidis serogroup A / serotype 4A (strain DSM 15465 / Z2491).